A 154-amino-acid chain; its full sequence is Ascorbate-specific PTS system EIIA component (154 aa).

The region spanning 6–150 is the PTS EIIA type-2 domain; sequence SLAENKSIRL…QEVLDLIDRT (145 aa). Residue His-68 is the Tele-phosphohistidine intermediate of the active site. His-68 carries the post-translational modification Phosphohistidine.

It is found in the cytoplasm. Functionally, the phosphoenolpyruvate-dependent sugar phosphotransferase system (sugar PTS), a major carbohydrate active transport system, catalyzes the phosphorylation of incoming sugar substrates concomitantly with their translocation across the cell membrane. The enzyme II UlaABC PTS system is involved in ascorbate transport. In Shigella flexneri, this protein is Ascorbate-specific PTS system EIIA component (ulaC).